A 612-amino-acid polypeptide reads, in one-letter code: MFS siderochrome iron transporter B (612 aa).

Topologically, residues 1–86 (MLHVLSVGPS…GAQAGVKKIE (86 aa)) are cytoplasmic. The tract at residues 55 to 78 (DKEAAHAPANAETNNEEANPSDGA) is disordered. The span at 60–72 (HAPANAETNNEEA) shows a compositional bias: low complexity. A helical transmembrane segment spans residues 87–104 (AVTLSWTRGTAIWFLTLV). Residues 105-127 (NDFRLSMYTSLNAYATSSFLGHS) lie on the Extracellular side of the membrane. Residues 128–148 (LLTVINIVSYVMGGSVYIPMA) traverse the membrane as a helical segment. The Cytoplasmic segment spans residues 149-156 (KALDLWGR). A helical transmembrane segment spans residues 157-177 (AEGFLLMTFFCILGLILLASS). The Extracellular portion of the chain corresponds to 178–187 (QNLPTYCAGQ). A helical membrane pass occupies residues 188 to 208 (VFYKVGFGGLSYTWNVLAADV). At 209 to 215 (TNLRNRG) the chain is on the cytoplasmic side. The helical transmembrane segment at 216-236 (LAFAFTSSPALISAFAGSKAA) threads the bilayer. At 237–246 (SDLLAHSTWR) the chain is on the extracellular side. Residues 247–267 (WGFGMWAIILPVVALPIYGLL) traverse the membrane as a helical segment. Over 268 to 302 (AYHLRQAEKKGVLVKETRDWSITPKTVWWAIMEFD) the chain is Cytoplasmic. Residues 303 to 323 (LPGVLLFAGGFVIFLLPFTLA) traverse the membrane as a helical segment. Over 324-334 (ATAPHGYQTDY) the chain is Extracellular. Residues 335 to 355 (IIAMITLGLALIIAFGFYEML) traverse the membrane as a helical segment. Residues 356 to 370 (VAPVPFLNYKFLIDR) lie on the Cytoplasmic side of the membrane. Residues 371–393 (TVLGACLLDMTYQVSYYCYASYL) form a helical membrane-spanning segment. Topologically, residues 394–409 (PSFLQVVYELDVATAG) are extracellular. A helical transmembrane segment spans residues 410–430 (YVTNTFSVVSFVFLFFAGWLI). Topologically, residues 431-435 (RWTGR) are cytoplasmic. Residues 436–456 (FKWILWVCVPLYIFGLGLMIH) traverse the membrane as a helical segment. The Extracellular portion of the chain corresponds to 457–463 (FRQPGGY). Residues 464 to 484 (IGYIVMCEIFFSVAGSVFILC) form a helical membrane-spanning segment. At 485–498 (VQLAVLASVDHQHV) the chain is on the cytoplasmic side. The chain crosses the membrane as a helical span at residues 499-519 (AAVLALLFVMGSIGGSIGSAI). The Extracellular portion of the chain corresponds to 520-575 (CGAIWTSTFLSRLERNLPASAMPDLSLIYSSLPTQLSYPVGSATRTAIVEAYGYAQ). A helical membrane pass occupies residues 576 to 596 (ARMLIAGTAFMVLGFIWVGMM). Over 597-612 (RNLNVKNMTQTKGNVV) the chain is Cytoplasmic.

This sequence belongs to the major facilitator superfamily.

The protein resides in the cell tip. It is found in the cytoplasmic vesicle membrane. The protein localises to the cell membrane. Its function is as follows. Major facilitator transporter involved in triacetylfusarinine C (TAFC) uptake. Can also transport ferricrocin and coprogen, but not ferrichrysin. MirB plays a crucial role for virulence in a murine model of pulmonary aspergillosis, indicating that TAFC-mediated iron uptake plays a dominant role during infection. This Aspergillus fumigatus (strain ATCC MYA-4609 / CBS 101355 / FGSC A1100 / Af293) (Neosartorya fumigata) protein is MFS siderochrome iron transporter B.